The chain runs to 82 residues: Probable acyl carrier protein IacP (82 aa).

The Carrier domain maps to 3–78 (MDIEARVKKV…DICRVVKKSL (76 aa)). Position 38 is an O-(pantetheine 4'-phosphoryl)serine (Ser38).

4'-phosphopantetheine is transferred from CoA to a specific serine of apo-IacP.

It is found in the cytoplasm. In terms of biological role, acyl carrier protein. The chain is Probable acyl carrier protein IacP (iacP) from Salmonella typhimurium (strain SL1344).